The sequence spans 202 residues: Methylthioribulose-1-phosphate dehydratase (202 aa).

Positions 93 and 95 each coordinate Zn(2+).

This sequence belongs to the aldolase class II family. MtnB subfamily. Requires Zn(2+) as cofactor.

It catalyses the reaction 5-(methylsulfanyl)-D-ribulose 1-phosphate = 5-methylsulfanyl-2,3-dioxopentyl phosphate + H2O. Its pathway is amino-acid biosynthesis; L-methionine biosynthesis via salvage pathway; L-methionine from S-methyl-5-thio-alpha-D-ribose 1-phosphate: step 2/6. In terms of biological role, catalyzes the dehydration of methylthioribulose-1-phosphate (MTRu-1-P) into 2,3-diketo-5-methylthiopentyl-1-phosphate (DK-MTP-1-P). In Klebsiella pneumoniae subsp. pneumoniae (strain ATCC 700721 / MGH 78578), this protein is Methylthioribulose-1-phosphate dehydratase.